The primary structure comprises 54 residues: Large ribosomal subunit protein bL32c (54 aa).

Belongs to the bacterial ribosomal protein bL32 family.

The protein resides in the plastid. Its subcellular location is the chloroplast. This Helianthus annuus (Common sunflower) protein is Large ribosomal subunit protein bL32c.